The primary structure comprises 297 residues: Mitochondrial citrate transporter A (297 aa).

Solcar repeat units lie at residues 12 to 91 (PSSL…LKSL), 102 to 188 (PKTV…LKQM), and 199 to 286 (LGTA…TMDA). A run of 6 helical transmembrane segments spans residues 18 to 31 (IIAGSTAGAVEIAI), 61 to 81 (SQWYAGCTTLIIGNSLKAGIR), 99 to 119 (ISGPKTVIAGFGAGFTESLLA), 160 to 180 (FFQGFVPTTARQAANSATRFS), 192 to 212 (YVAPGEKLGTASTFALGGIAG), and 251 to 272 (KDEGIFTFWSGAVPRLARLIMS).

This sequence belongs to the mitochondrial carrier (TC 2.A.29) family.

The protein localises to the mitochondrion inner membrane. It catalyses the reaction citrate(in) + H(+)(in) = citrate(out) + H(+)(out). In terms of biological role, mitochondrial transporter that mediates citrate export from mitochondria to cytoplasm. Both ctpA, ctpB, and ctpD play important roles in citric acid transport across the mitochondrial membrane and function in a redundant manner. This is Mitochondrial citrate transporter A from Aspergillus niger (strain ATCC 1015 / CBS 113.46 / FGSC A1144 / LSHB Ac4 / NCTC 3858a / NRRL 328 / USDA 3528.7).